Consider the following 198-residue polypeptide: Imidazoleglycerol-phosphate dehydratase (198 aa).

It belongs to the imidazoleglycerol-phosphate dehydratase family.

The protein resides in the cytoplasm. It carries out the reaction D-erythro-1-(imidazol-4-yl)glycerol 3-phosphate = 3-(imidazol-4-yl)-2-oxopropyl phosphate + H2O. Its pathway is amino-acid biosynthesis; L-histidine biosynthesis; L-histidine from 5-phospho-alpha-D-ribose 1-diphosphate: step 6/9. The protein is Imidazoleglycerol-phosphate dehydratase of Agrobacterium fabrum (strain C58 / ATCC 33970) (Agrobacterium tumefaciens (strain C58)).